Reading from the N-terminus, the 911-residue chain is DNA replication licensing factor mcm4 (911 aa).

Residues 1–132 (MSSSQQSGRA…RPGVSTPSSL (132 aa)) are disordered. Residues Ser-37, Ser-38, and Ser-41 each carry the phosphoserine modification. A compositionally biased stretch (low complexity) spans 42 to 56 (TRLTTPRTTARTPLA). Residues 63–84 (ESSSPGPNIPQSSRSHLLSQRN) show a composition bias toward polar residues. The residue at position 92 (Ser-92) is a Phosphoserine. The MCM domain maps to 493–702 (IYDILSRSLA…LDRKLANHIV (210 aa)). 545–552 (GDPSTSKS) lines the ATP pocket. The short motif at 677–680 (SRFD) is the Arginine finger element.

The protein belongs to the MCM family. Component of the mcm2-7 complex. The complex forms a toroidal hexameric ring with the proposed subunit order mcm2-mcm6-mcm4-mcm7-mcm3-mcm5. The heterodimers of mcm4/mcm6 and mcm3/mcm5 interact with mcm2 and mcm7.

It is found in the nucleus. It catalyses the reaction ATP + H2O = ADP + phosphate + H(+). Functionally, acts as a component of the mcm2-7 complex (mcm complex) which is the putative replicative helicase essential for 'once per cell cycle' DNA replication initiation and elongation in eukaryotic cells. The active ATPase sites in the mcm2-7 ring are formed through the interaction surfaces of two neighboring subunits such that a critical structure of a conserved arginine finger motif is provided in trans relative to the ATP-binding site of the Walker A box of the adjacent subunit. The six ATPase active sites, however, are likely to contribute differentially to the complex helicase activity. Required for S phase execution. This chain is DNA replication licensing factor mcm4 (mcm4), found in Schizosaccharomyces pombe (strain 972 / ATCC 24843) (Fission yeast).